The following is a 613-amino-acid chain: DNA mismatch repair protein MutL (613 aa).

Belongs to the DNA mismatch repair MutL/HexB family.

In terms of biological role, this protein is involved in the repair of mismatches in DNA. It is required for dam-dependent methyl-directed DNA mismatch repair. May act as a 'molecular matchmaker', a protein that promotes the formation of a stable complex between two or more DNA-binding proteins in an ATP-dependent manner without itself being part of a final effector complex. This is DNA mismatch repair protein MutL from Bradyrhizobium sp. (strain ORS 278).